A 271-amino-acid polypeptide reads, in one-letter code: MASTTNNTPIDTVILDIEGTVCPITFVKDTLFPYFIEKLPSILQKFQYPLPTTTTSDNDDDDDDDPVLNILKQLPENIIQSWESIFNHFKNLVDQDIKDPILKSLQGLIWKQGYENNELKAPIYQDSIKFIESFPTVKSKDNQRKIYIYSSGSIKAQILLFGHVKNSSTSTTSSSIDNDTIDLNDKLNGYFDITTVGFKNQSNSYIKILQEINKSQYPQSVLFLSDNINEVNAAINAGMKSYIVIRPGNSPINDEDKKFHKIIYSLDELDL.

Mg(2+)-binding residues include aspartate 16 and glutamate 18. Substrate-binding positions include 150 to 151 and lysine 199; that span reads SS. Mg(2+) is bound at residue aspartate 226.

The protein belongs to the HAD-like hydrolase superfamily. MasA/MtnC family. As to quaternary structure, monomer. It depends on Mg(2+) as a cofactor.

It is found in the cytoplasm. The protein localises to the nucleus. It catalyses the reaction 5-methylsulfanyl-2,3-dioxopentyl phosphate + H2O = 1,2-dihydroxy-5-(methylsulfanyl)pent-1-en-3-one + phosphate. Its pathway is amino-acid biosynthesis; L-methionine biosynthesis via salvage pathway; L-methionine from S-methyl-5-thio-alpha-D-ribose 1-phosphate: step 3/6. It participates in amino-acid biosynthesis; L-methionine biosynthesis via salvage pathway; L-methionine from S-methyl-5-thio-alpha-D-ribose 1-phosphate: step 4/6. Bifunctional enzyme that catalyzes the enolization of 2,3-diketo-5-methylthiopentyl-1-phosphate (DK-MTP-1-P) into the intermediate 2-hydroxy-3-keto-5-methylthiopentenyl-1-phosphate (HK-MTPenyl-1-P), which is then dephosphorylated to form the acireductone 1,2-dihydroxy-3-keto-5-methylthiopentene (DHK-MTPene). The sequence is that of Enolase-phosphatase E1 from Candida dubliniensis (strain CD36 / ATCC MYA-646 / CBS 7987 / NCPF 3949 / NRRL Y-17841) (Yeast).